The sequence spans 160 residues: Serine-protein kinase RsbW (160 aa).

This sequence belongs to the anti-sigma-factor family.

The enzyme catalyses L-seryl-[protein] + ATP = O-phospho-L-seryl-[protein] + ADP + H(+). It catalyses the reaction L-threonyl-[protein] + ATP = O-phospho-L-threonyl-[protein] + ADP + H(+). In terms of biological role, negative regulator of sigma-B activity. Phosphorylates and inactivates its specific antagonist protein, RsbV. Upon phosphorylation of RsbV, RsbW is released and binds to sigma-B, thereby blocking its ability to form an RNA polymerase holoenzyme (E-sigma-B). The sequence is that of Serine-protein kinase RsbW from Bacillus thuringiensis (strain Al Hakam).